The primary structure comprises 396 residues: Succinyl-diaminopimelate desuccinylase (396 aa).

Zn(2+) is bound at residue His-74. The active site involves Asp-76. A Zn(2+)-binding site is contributed by Asp-107. Catalysis depends on Glu-142, which acts as the Proton acceptor. 3 residues coordinate Zn(2+): Glu-143, Glu-171, and His-360.

Belongs to the peptidase M20A family. DapE subfamily. Homodimer. Zn(2+) is required as a cofactor. Co(2+) serves as cofactor.

It carries out the reaction N-succinyl-(2S,6S)-2,6-diaminopimelate + H2O = (2S,6S)-2,6-diaminopimelate + succinate. It functions in the pathway amino-acid biosynthesis; L-lysine biosynthesis via DAP pathway; LL-2,6-diaminopimelate from (S)-tetrahydrodipicolinate (succinylase route): step 3/3. In terms of biological role, catalyzes the hydrolysis of N-succinyl-L,L-diaminopimelic acid (SDAP), forming succinate and LL-2,6-diaminopimelate (DAP), an intermediate involved in the bacterial biosynthesis of lysine and meso-diaminopimelic acid, an essential component of bacterial cell walls. This chain is Succinyl-diaminopimelate desuccinylase, found in Methylobacterium nodulans (strain LMG 21967 / CNCM I-2342 / ORS 2060).